The chain runs to 306 residues: GTP cyclohydrolase FolE2 (306 aa).

The protein belongs to the GTP cyclohydrolase IV family.

The catalysed reaction is GTP + H2O = 7,8-dihydroneopterin 3'-triphosphate + formate + H(+). It functions in the pathway cofactor biosynthesis; 7,8-dihydroneopterin triphosphate biosynthesis; 7,8-dihydroneopterin triphosphate from GTP: step 1/1. Its function is as follows. Converts GTP to 7,8-dihydroneopterin triphosphate. The protein is GTP cyclohydrolase FolE2 of Xanthomonas oryzae pv. oryzae (strain MAFF 311018).